Here is a 457-residue protein sequence, read N- to C-terminus: Putative metabolite transport protein YwtG (457 aa).

The next 12 helical transmembrane spans lie at 7 to 27, 38 to 58, 75 to 95, 97 to 117, 136 to 156, 163 to 183, 240 to 260, 276 to 296, 309 to 329, 340 to 360, 377 to 397, and 400 to 420; these read IWLY…TGVI, LGLN…GAIL, AIMA…LAPN, GVMV…TTIV, LNQL…YIFA, WMLG…LFMP, ALIA…NTII, ASIL…LVAI, LFGN…NLFF, VICL…VVWV, VSTL…PILM, and IGIS…FLFV. A disordered region spans residues 438-457; that stretch reads DLRDKNGQGGAAGKQQTVGT.

The protein belongs to the major facilitator superfamily. Sugar transporter (TC 2.A.1.1) family.

It localises to the cell membrane. This chain is Putative metabolite transport protein YwtG (ywtG), found in Bacillus subtilis (strain 168).